A 212-amino-acid polypeptide reads, in one-letter code: Large ribosomal subunit protein uL3 (212 aa).

Glutamine 153 is subject to N5-methylglutamine.

It belongs to the universal ribosomal protein uL3 family. In terms of assembly, part of the 50S ribosomal subunit. Forms a cluster with proteins L14 and L19. Methylated by PrmB.

Its function is as follows. One of the primary rRNA binding proteins, it binds directly near the 3'-end of the 23S rRNA, where it nucleates assembly of the 50S subunit. This Shewanella halifaxensis (strain HAW-EB4) protein is Large ribosomal subunit protein uL3.